Here is a 92-residue protein sequence, read N- to C-terminus: YcgL domain-containing protein Shewana3_2381 (92 aa).

The region spanning 1–85 (MLCAVYKSSR…PQVNLLAEHR (85 aa)) is the YcgL domain.

In Shewanella sp. (strain ANA-3), this protein is YcgL domain-containing protein Shewana3_2381.